A 602-amino-acid polypeptide reads, in one-letter code: Rho family-interacting cell polarization regulator 2 (602 aa).

A disordered region spans residues 46-73; the sequence is KKPQAKVKKMHNLGHKNSTTPKEPQPKR. Positions 48–59 are enriched in basic residues; that stretch reads PQAKVKKMHNLG. Residues 83-112 adopt a coiled-coil conformation; it reads NGLDEYLEVHQTELDKLTAQLKDMRRNSRL. Residues 173–421 form a necessary for interaction with NCAM and myoblast protrusion formation region; it reads RESLTEINRS…TTAATQHRAL (249 aa). Positions 384–474 are disordered; the sequence is GDLPYEDRVP…RSEVCQKPSN (91 aa). Residues 403–416 are compositionally biased toward polar residues; it reads AHVSSSPDITTAAT. Positions 423–437 are enriched in low complexity; the sequence is SSESSSPDCSSSDSC.

This sequence belongs to the RIPOR family. In terms of assembly, homooligomer; homooligomerization is regulated by RHOC and leads to the formation of concatemers through the association of N- and C-termini. Interacts with NCAM.

The protein resides in the cytoplasm. It is found in the cytoskeleton. Its subcellular location is the cell projection. The protein localises to the filopodium. It localises to the apical cell membrane. The protein resides in the stereocilium. It is found in the stereocilium membrane. Its function is as follows. Acts as an inhibitor of the small GTPase RHOA and plays several roles in the regulation of myoblast and hair cell differentiation, lymphocyte T proliferation and neutrophil polarization. Plays a role in fetal mononuclear myoblast differentiation by promoting filopodia and myotube formation. Maintains naive T lymphocytes in a quiescent state and prevents chemokine-induced T lymphocyte responses, such as cell adhesion, polarization and migration. Involved also in the regulation of neutrophil polarization, chemotaxis and adhesion. Required for normal development of inner and outer hair cell stereocilia within the cochlea of the inner ear. Plays a role for maintaining the structural organization of the basal domain of stereocilia. Involved in mechanosensory hair cell function. Required for normal hearing. This Gallus gallus (Chicken) protein is Rho family-interacting cell polarization regulator 2.